Reading from the N-terminus, the 295-residue chain is 15-cis-phytoene synthase (295 aa).

This sequence belongs to the phytoene/squalene synthase family. ATP is required as a cofactor. The cofactor is Mn(2+).

It catalyses the reaction 2 (2E,6E,10E)-geranylgeranyl diphosphate = 15-cis-phytoene + 2 diphosphate. The protein operates within carotenoid biosynthesis; phytoene biosynthesis. Its activity is regulated as follows. Significant inhibition is seen at GGPP concentrations above 100 uM. In terms of biological role, involved in the biosynthesis of carotenoids. Catalyzes stereoselectively the condensation of two molecules of geranylgeranyl diphosphate (GGPP) to give prephytoene diphosphate (PPPP) and the subsequent rearrangement of the cyclopropylcarbinyl intermediate to yield 15-cis-phytoene. The sequence is that of 15-cis-phytoene synthase (crtB) from Enterobacter agglomerans (Erwinia herbicola).